The chain runs to 555 residues: Probable apyrase 6 (555 aa).

Residues 1-10 (MRRSHARSRV) are compositionally biased toward basic residues. Residues 1–45 (MRRSHARSRVKNSSSSKSDMDPIKFQIRSGNRAPSSSSTYTLTKP) form a disordered region. Over 1 to 55 (MRRSHARSRVKNSSSSKSDMDPIKFQIRSGNRAPSSSSTYTLTKPNSKHAKSNLL) the chain is Cytoplasmic. Residues 28–45 (RSGNRAPSSSSTYTLTKP) show a composition bias toward polar residues. The helical transmembrane segment at 56–76 (LTVGSISVVLGVLFLCYSILF) threads the bilayer. The Extracellular portion of the chain corresponds to 77–512 (SGGNLRGSLR…HALFSNHPKT (436 aa)). Residue 89–99 (VVIDGGSTGTR) participates in ATP binding. E212 serves as the catalytic Proton acceptor. Residue 236–246 (GIVELGGASAQ) participates in ATP binding. N267 and N348 each carry an N-linked (GlcNAc...) asparagine glycan. Residues 513 to 533 (LHYLIGIPILMTVLVYLVTKW) form a helical membrane-spanning segment. Residues 534-555 (RKPQLKTIYDLEKGRYIVTRIR) lie on the Cytoplasmic side of the membrane.

Belongs to the GDA1/CD39 NTPase family. Requires Ca(2+) as cofactor. In terms of tissue distribution, detected in mature pollen grains (at the protein level). Also expressed in the veins and hydathode regions of rosette leaves.

Its subcellular location is the cytoplasmic vesicle membrane. The catalysed reaction is a ribonucleoside 5'-triphosphate + 2 H2O = a ribonucleoside 5'-phosphate + 2 phosphate + 2 H(+). In terms of biological role, catalyzes the hydrolysis of phosphoanhydride bonds of nucleoside tri- and di-phosphates. Involved in the regulation of pollen and anther development. The chain is Probable apyrase 6 (APY6) from Arabidopsis thaliana (Mouse-ear cress).